The sequence spans 221 residues: Large ribosomal subunit protein uL4 (221 aa).

The tract at residues 45–100 is disordered; it reads ARQGTHKTKNRGEVSGAGRKPFKQKGTGRARQGSIRAPQMTGGGIVHGPTPRDYSQ.

The protein belongs to the universal ribosomal protein uL4 family. In terms of assembly, part of the 50S ribosomal subunit.

Functionally, one of the primary rRNA binding proteins, this protein initially binds near the 5'-end of the 23S rRNA. It is important during the early stages of 50S assembly. It makes multiple contacts with different domains of the 23S rRNA in the assembled 50S subunit and ribosome. Its function is as follows. Forms part of the polypeptide exit tunnel. This Leifsonia xyli subsp. xyli (strain CTCB07) protein is Large ribosomal subunit protein uL4.